The chain runs to 926 residues: Storkhead-box protein 2 (926 aa).

Disordered stretches follow at residues 1 to 32 (MKKTRSTTLRRAWPSSDFSDRASDRMRSRSEK), 338 to 394 (EEEK…IPGG), 452 to 529 (EMPF…SYVD), 632 to 693 (GVKK…SLDK), 724 to 803 (LKSH…GTMQ), and 825 to 926 (LAPK…VTSV). Residues 18–32 (FSDRASDRMRSRSEK) are compositionally biased toward basic and acidic residues. Over residues 353–378 (HSGRSKKSRTHRKSHGKSRSHSKTRV) the composition is skewed to basic residues. The span at 379–394 (SKGDPSDGSHLDIPGG) shows a compositional bias: basic and acidic residues. The span at 463 to 472 (SHSKVHRSHS) shows a compositional bias: basic residues. The segment covering 473-495 (HTQDRRSRNERSNKAKERSRSMD) has biased composition (basic and acidic residues). Positions 518 to 529 (QDDQTPSQSYVD) are enriched in polar residues. Basic and acidic residues-rich tracts occupy residues 632–658 (GVKKLSPSDRQVPHSSREPVGHKEESP) and 684–693 (HGAEPSSLDK). The segment covering 746–772 (LGTSAAQATPASQRQQESGGNQETSFD) has biased composition (polar residues). Residues 785 to 799 (GANKNTEEEKNREDV) show a composition bias toward basic and acidic residues. Composition is skewed to polar residues over residues 847-884 (MDSSSITVDSGFNSPRTRESLASNTSSIVESNRRQNPA) and 914-926 (KPSNCLQASVTSV).

This chain is Storkhead-box protein 2 (STOX2), found in Macaca fascicularis (Crab-eating macaque).